The chain runs to 201 residues: dTTP/UTP pyrophosphatase (201 aa).

Residue Asp81 is the Proton acceptor of the active site.

This sequence belongs to the Maf family. YhdE subfamily. A divalent metal cation serves as cofactor.

The protein resides in the cytoplasm. It catalyses the reaction dTTP + H2O = dTMP + diphosphate + H(+). The enzyme catalyses UTP + H2O = UMP + diphosphate + H(+). Its function is as follows. Nucleoside triphosphate pyrophosphatase that hydrolyzes dTTP and UTP. May have a dual role in cell division arrest and in preventing the incorporation of modified nucleotides into cellular nucleic acids. The sequence is that of dTTP/UTP pyrophosphatase from Bordetella avium (strain 197N).